A 94-amino-acid polypeptide reads, in one-letter code: Serine protease inhibitor Kazal-type 13 (94 aa).

The first 23 residues, 1–23 (MAAFPHKIIFFLVCSTLTHVAFS), serve as a signal peptide directing secretion. A Kazal-like domain is found at 33–94 (RWPKPRCKMY…IKFEKYGKCD (62 aa)). 3 disulfides stabilise this stretch: cysteine 39-cysteine 75, cysteine 53-cysteine 72, and cysteine 61-cysteine 93. The N-linked (GlcNAc...) asparagine glycan is linked to asparagine 55.

It is found in the secreted. Functionally, may be a serine protease inhibitor. Essential for sperm maturation and fertility. Inhibits sperm acrosome reaction, protecting sperm from premature reaction. The sequence is that of Serine protease inhibitor Kazal-type 13 (SPINK13) from Homo sapiens (Human).